Here is a 699-residue protein sequence, read N- to C-terminus: MARKTPIEHYRNIGICAHVDAGKTTTTERILFYTGLSHKIGEVHDGAATMDWMEQEQERGITITSAATTTFWRGMEAQFPEHRVNIIDTPGHVDFTIEVERSLRVLDGAVVVFCGSSGVEPQSETVWRQADKYHVPRMVFVNKMDRAGADFLRVVDQIKNRLGANPVPIQLNVGAEEDFRGVIDLIKMKMINWNDADQGMSFTYEDIPADMIDLAEEWRNHMIESAAEASEELMDKYLEEGELTEAEIKQALRTRTLNNEIVLATCGSAFKNKGVQAVLDAVIEFLPSPSDVPAIKGVDEKDNEIERHADDNEPFSALAFKIATDPFVGTLTFMRVYSGVVNSGDAVYNSVKEKKERFGRIVQMHANKREEIKEVRAGDIAAAIGLKDVTTGDTLCDQSHKVILERMEFPEPVIQIAVEPRSKADQEKMGIALGKLAAEDPSFRVETDDETGQTLISGMGELHLDIIVDRMKREFSVDCNVGKPQVAYRETIRGKAEVEGKFVRQSGGRGQYGHVWVKLEPSEPGEGFVFVDEIVGGVIPKEYISSVAKGIEEQMNSGVLAGYPVLDIKATLFDGSYHDVDSSEMAFKIAGSMAFKKGALEAQPVILEPMMNVEVTTPEDWMGDVVGDLNRRRGMIEGMDEGVAGLKIIRAQVPLSEMFGYATDLRSATQGRASYSMEFNEYAEVPKNFADKIIAERGY.

The tr-type G domain maps to 8–290 (EHYRNIGICA…AVIEFLPSPS (283 aa)). Residues 17–24 (AHVDAGKT), 88–92 (DTPGH), and 142–145 (NKMD) contribute to the GTP site.

This sequence belongs to the TRAFAC class translation factor GTPase superfamily. Classic translation factor GTPase family. EF-G/EF-2 subfamily.

The protein localises to the cytoplasm. Functionally, catalyzes the GTP-dependent ribosomal translocation step during translation elongation. During this step, the ribosome changes from the pre-translocational (PRE) to the post-translocational (POST) state as the newly formed A-site-bound peptidyl-tRNA and P-site-bound deacylated tRNA move to the P and E sites, respectively. Catalyzes the coordinated movement of the two tRNA molecules, the mRNA and conformational changes in the ribosome. The protein is Elongation factor G 1 of Vibrio parahaemolyticus serotype O3:K6 (strain RIMD 2210633).